Here is a 545-residue protein sequence, read N- to C-terminus: Pseudouridylate synthase RPUSD2 (545 aa).

Residues 48–121 (GLRASHQQNG…PPPKKRRTGV (74 aa)) are disordered. A Phosphoserine modification is found at S68. Residue D274 is part of the active site. Phosphothreonine is present on T477.

Belongs to the pseudouridine synthase RluA family.

The catalysed reaction is a uridine in mRNA = a pseudouridine in mRNA. Its function is as follows. Pseudouridine synthase that catalyzes pseudouridylation of mRNAs. In Homo sapiens (Human), this protein is Pseudouridylate synthase RPUSD2.